A 503-amino-acid polypeptide reads, in one-letter code: UBX domain-containing protein 7 homolog (503 aa).

Disordered stretches follow at residues 47-80, 262-284, and 299-389; these read SNVK…EDEF, GQID…KYNT, and QEQE…YDDN. Low complexity predominate over residues 50–71; sequence KPTTSSKKTSSPPTASSSSASS. The UIM domain maps to 284–303; that stretch reads TEDEELELAIALSLKQEQER. The span at 314–350 shows a compositional bias: low complexity; sequence SQQQQQQQQQNNNNNNNNNSNNNNSTSTTTTTSTTTT. Residues 362-387 are compositionally biased toward acidic residues; the sequence is KEDEDDVEEKDEDFEDDDEIEEDNYD. Residues 424-500 form the UBX domain; that stretch reads GTEGDCIIQV…DLAPRAVLNM (77 aa).

This is UBX domain-containing protein 7 homolog (ubxd7) from Dictyostelium discoideum (Social amoeba).